The chain runs to 230 residues: Urease accessory protein UreF (230 aa).

Belongs to the UreF family. As to quaternary structure, ureD, UreF and UreG form a complex that acts as a GTP-hydrolysis-dependent molecular chaperone, activating the urease apoprotein by helping to assemble the nickel containing metallocenter of UreC. The UreE protein probably delivers the nickel.

It localises to the cytoplasm. Required for maturation of urease via the functional incorporation of the urease nickel metallocenter. The polypeptide is Urease accessory protein UreF (Cupriavidus pinatubonensis (strain JMP 134 / LMG 1197) (Cupriavidus necator (strain JMP 134))).